Reading from the N-terminus, the 179-residue chain is Large ribosomal subunit protein uL5 (179 aa).

The protein belongs to the universal ribosomal protein uL5 family. Part of the 50S ribosomal subunit; part of the 5S rRNA/L5/L18/L25 subcomplex. Contacts the 5S rRNA and the P site tRNA. Forms a bridge to the 30S subunit in the 70S ribosome.

This is one of the proteins that bind and probably mediate the attachment of the 5S RNA into the large ribosomal subunit, where it forms part of the central protuberance. In the 70S ribosome it contacts protein S13 of the 30S subunit (bridge B1b), connecting the 2 subunits; this bridge is implicated in subunit movement. Contacts the P site tRNA; the 5S rRNA and some of its associated proteins might help stabilize positioning of ribosome-bound tRNAs. In Synechococcus sp. (strain RCC307), this protein is Large ribosomal subunit protein uL5.